We begin with the raw amino-acid sequence, 383 residues long: Cell division protein FtsZ (383 aa).

Residues 20–24 (GGGGN), 107–109 (GTG), E138, R142, and N186 contribute to the GTP site.

This sequence belongs to the FtsZ family. Homodimer. Polymerizes to form a dynamic ring structure in a strictly GTP-dependent manner. Interacts directly with several other division proteins.

The protein localises to the cytoplasm. Its function is as follows. Essential cell division protein that forms a contractile ring structure (Z ring) at the future cell division site. The regulation of the ring assembly controls the timing and the location of cell division. One of the functions of the FtsZ ring is to recruit other cell division proteins to the septum to produce a new cell wall between the dividing cells. Binds GTP and shows GTPase activity. The protein is Cell division protein FtsZ of Shigella flexneri.